Consider the following 638-residue polypeptide: Rik1-associated factor 1 (638 aa).

4 WD repeats span residues 297 to 336, 486 to 525, 544 to 583, and 587 to 626; these read KEYSTISDLCFSKGNLFLYTGAFDNAVKVWDMEGNLCGIF, TTQKDINHATISNSGILVTSSGTDNQTFVWDSRKPDKPLS, EVDAGINMAQWQPKGNLFVTGGSDGIVKVWDLRLNNPFIQ, and EMNSAITYGGFSEDASKLTVCCVGGDVNMYSLGNDNGNKF.

In terms of assembly, component of the Clr4 methyltransferase complex (ClrC) composed of at least clr4, rik1, pcu4, rbx1, raf1 and raf2. The cullin pcu4, rik1, raf1, raf2 and the ring-box protein rbx1 are components of an E3 ubiquitin ligase, whose activity is essential for heterochromatin assembly. Interacts with nup189.

It is found in the cytoplasm. The protein resides in the nucleus. It localises to the chromosome. In terms of biological role, component of the Clr4 methyltransferase complex (ClrC) which contributes to the establishment of heterochromatin by specifically methylating histone H3 to form H3K9me. ClrC preferentially ubiquitylates H3K14 and ClrC-mediated H3 ubiquitination promotes clr4 methyltransferase activity for the methylation of H3K9. H3K9me represents a specific tag for epigenetic transcriptional repression by recruiting swi6/HP1 to methylated histones which leads to transcriptional silencing within centromeric heterochromatin, telomeric regions and at the silent mating-type loci. Has a role in both mitotic and meiotic chromosome segregation. In Schizosaccharomyces pombe (strain 972 / ATCC 24843) (Fission yeast), this protein is Rik1-associated factor 1 (raf1).